Reading from the N-terminus, the 174-residue chain is ATP-dependent protease subunit HslV (174 aa).

Thr-2 is an active-site residue. Residues Gly-157, Cys-160, and Thr-163 each contribute to the Na(+) site.

It belongs to the peptidase T1B family. HslV subfamily. As to quaternary structure, a double ring-shaped homohexamer of HslV is capped on each side by a ring-shaped HslU homohexamer. The assembly of the HslU/HslV complex is dependent on binding of ATP.

It is found in the cytoplasm. It carries out the reaction ATP-dependent cleavage of peptide bonds with broad specificity.. With respect to regulation, allosterically activated by HslU binding. Protease subunit of a proteasome-like degradation complex believed to be a general protein degrading machinery. This is ATP-dependent protease subunit HslV from Shewanella woodyi (strain ATCC 51908 / MS32).